A 167-amino-acid polypeptide reads, in one-letter code: U-scoloptoxin(08)-Er5b (167 aa).

The first 22 residues, 1–22, serve as a signal peptide directing secretion; the sequence is MKTNCEFPLLCLLIVLVANVEG. A propeptide spanning residues 23-94 is cleaved from the precursor; it reads EVEDTGLKMV…KRLWRNWERR (72 aa). 3 RLWRNWE repeats span residues 34–40, 61–67, and 86–92; these read RLWRNWE. Gln-95 is subject to Pyrrolidone carboxylic acid. The stretch at 107–113 is one RLWRNWE 4; approximate repeat; sequence ELWRNWE. A propeptide spanning residues 112–118 is cleaved from the precursor; sequence WEDLKRR. Position 119 is a pyrrolidone carboxylic acid (Gln-119). An RLWRNWE 5 repeat occupies 134–140; sequence RLWRNWE. Positions 139–167 are excised as a propeptide; the sequence is WEDNHATLRKRSADSLSRQKRLGKERGKE. Residues 147 to 167 are disordered; the sequence is RKRSADSLSRQKRLGKERGKE.

This sequence belongs to the scoloptoxin-08 family. As to expression, expressed by the venom gland.

The protein localises to the secreted. This is U-scoloptoxin(08)-Er5b from Ethmostigmus rubripes (Giant centipede).